We begin with the raw amino-acid sequence, 195 residues long: ATP-dependent Clp protease proteolytic subunit (195 aa).

The Nucleophile role is filled by serine 96. Histidine 121 is a catalytic residue.

This sequence belongs to the peptidase S14 family. Fourteen ClpP subunits assemble into 2 heptameric rings which stack back to back to give a disk-like structure with a central cavity, resembling the structure of eukaryotic proteasomes.

The protein localises to the cytoplasm. It carries out the reaction Hydrolysis of proteins to small peptides in the presence of ATP and magnesium. alpha-casein is the usual test substrate. In the absence of ATP, only oligopeptides shorter than five residues are hydrolyzed (such as succinyl-Leu-Tyr-|-NHMec, and Leu-Tyr-Leu-|-Tyr-Trp, in which cleavage of the -Tyr-|-Leu- and -Tyr-|-Trp bonds also occurs).. In terms of biological role, cleaves peptides in various proteins in a process that requires ATP hydrolysis. Has a chymotrypsin-like activity. Plays a major role in the degradation of misfolded proteins. This Elusimicrobium minutum (strain Pei191) protein is ATP-dependent Clp protease proteolytic subunit.